Reading from the N-terminus, the 837-residue chain is Espin (837 aa).

9 ANK repeats span residues 1-31 (MALE…GPSL), 35-66 (LDAL…AVSR), 69-99 (NGAT…RVQE), 103-132 (SGAT…ANSA), 137-167 (TGAL…GVNA), 171-201 (NGAT…DPHL), 205-235 (DGMT…SFEQ), 238-267 (DGAT…EISQ), and 270-299 (WGGT…GLDV). Phosphoserine is present on residues S337 and S341. Residues 339 to 348 (DPSMDLEAKQ) show a composition bias toward basic and acidic residues. Disordered stretches follow at residues 339–459 (DPSM…VGLH), 477–712 (DSLK…PATL), 745–767 (KLQQ…EARL), and 785–816 (EREQ…TLGY). Positions 351–364 (SGMSSPNTTMSVQP) are enriched in polar residues. Positions 376-395 (LSNYDSCSSSHSSSKGQRST) are enriched in low complexity. Phosphoserine occurs at positions 400 and 401. Residues 423–455 (SLPPPPPPSFPPPPPPGTQLPPPPPGYPAPNPP) are compositionally biased toward pro residues. Phosphoserine occurs at positions 497, 504, and 531. Over residues 581–604 (LPPPPPPPPLPEALSSPPPAPPLP) the composition is skewed to pro residues. Residues 617 to 626 (SSSSTGSTKS) are compositionally biased toward low complexity. Polar residues-rich tracts occupy residues 627-636 (FNMMSPTGDN) and 651-662 (PTPQSKGLTTVF). S631 carries the phosphoserine modification. The region spanning 635-652 (DNSELLAEIKAGKSLKPT) is the WH2 domain. Positions 663 to 673 (SGSGQPASQPE) are enriched in low complexity. S670, S674, and S680 each carry phosphoserine. A coiled-coil region spans residues 738-814 (KRQVMVRKLQ…KEQSEKLRTL (77 aa)).

Monomer. Interacts with PFN2. Binds F-actin in a Ca(2+)-resistant fashion. Interacts (via N-terminal) with BAIAP2 (via SH3-domain). Interacts with MYO3A (via C-terminus). Interacts with MYO3B (via C-terminus). As to expression, expressed at high concentration in the microvillar parallel actin bundle (PAB) of hair cells stereocilia in the cochlea and vestibular system. Detected also at high levels of a number of other sensory cell types, including taste receptor cells, solitary chemoreceptor cells, vomeronasal sensory neurons and Merkel cells. Isoform 1 is detected in testis. Isoforms 2 is detected in small intestine and kidney (at protein level). Isoforms 3, 4, 6 and 8 are expressed in Purkinje cells dendritic spines.

The protein resides in the cytoplasm. It is found in the cytoskeleton. Its subcellular location is the cell projection. The protein localises to the stereocilium. It localises to the microvillus. The protein resides in the cell junction. It is found in the dendritic spine. In terms of biological role, multifunctional actin-bundling protein. Plays a major role in regulating the organization, dimension, dynamics and signaling capacities of the actin filament-rich microvilli in the mechanosensory and chemosensory cells. Required for the assembly and stabilization of the stereociliary parallel actin bundles. Plays a crucial role in the formation and maintenance of inner ear hair cell stereocilia. Involved in the elongation of actin in stereocilia. In extrastriolar hair cells, required for targeting MYO3B to stereocilia tips, and for regulation of stereocilia diameter and staircase formation. The sequence is that of Espin (Espn) from Rattus norvegicus (Rat).